The primary structure comprises 609 residues: Actin-interacting protein 1-2 (609 aa).

WD repeat units lie at residues 2–42, 54–93, 97–141, 142–182, 185–224, 230–269, 277–318, 322–362, 445–484, 489–528, 532–571, and 576–609; these read ELSE…VTLD, EHAY…VLKN, VLAG…GEFD, GHSR…FKLS, EHSN…ILGE, GHKG…SGSL, GSSG…KSPF, GHMK…CGKL, NLGF…LTEE, RHRG…MKLK, YHSA…SSRM, and AHLG…FTPQ.

In terms of tissue distribution, expressed in leaves, stems, flower buds and flowers.

Binds actin. Enhances the F-actin depolymerization activity of actin-depolymerizing factor (ADF) proteins. In Arabidopsis thaliana (Mouse-ear cress), this protein is Actin-interacting protein 1-2.